Consider the following 529-residue polypeptide: Probable E3 ubiquitin-protein ligase MGRN1 (529 aa).

The RING-type zinc-finger motif lies at 275–314 (ECVVCLSDLRDTLILPCRHLCLCNACADTLRYQANNCPIC). Disordered regions lie at residues 341 to 362 (SPVLSQSSDHTEHSNADNIPPG) and 396 to 529 (EMGD…VEEC). Composition is skewed to polar residues over residues 449-463 (AQPQSVLPCSLSPSE) and 477-487 (NSGSESRSLGV). Over residues 501–511 (SSLSQSESDPS) the composition is skewed to low complexity. The segment covering 520–529 (ESWSTAVEEC) has biased composition (polar residues).

Autoubiquitinated in vitro.

It catalyses the reaction S-ubiquitinyl-[E2 ubiquitin-conjugating enzyme]-L-cysteine + [acceptor protein]-L-lysine = [E2 ubiquitin-conjugating enzyme]-L-cysteine + N(6)-ubiquitinyl-[acceptor protein]-L-lysine.. Its pathway is protein modification; protein ubiquitination. Its function is as follows. E3 ubiquitin-protein ligase. Also acts as a negative regulator of hedgehog signaling. The chain is Probable E3 ubiquitin-protein ligase MGRN1 (mgrn1) from Danio rerio (Zebrafish).